The chain runs to 162 residues: MTSIVRTLRSLTLWELVSGMALTFRYMLKPKVTINYPFEKGYLSPRFRGEHALRRYANGEERCIACKLCEAICPAQAITIEAEPRTDGSRRTTRYDIDMTKCIYCGFCEEACPVDAIVEGPNFEFAAETREELLYNKAKLLANGDRWEPELALRLRKDAAYR.

4Fe-4S ferredoxin-type domains are found at residues 53–83 (LRRY…IEAE) and 93–122 (TRYD…EGPN). Residues Cys-63, Cys-66, Cys-69, Cys-73, Cys-102, Cys-105, Cys-108, and Cys-112 each contribute to the [4Fe-4S] cluster site.

The protein belongs to the complex I 23 kDa subunit family. NDH-1 is composed of 14 different subunits. Subunits NuoA, H, J, K, L, M, N constitute the membrane sector of the complex. The cofactor is [4Fe-4S] cluster.

The protein resides in the cell inner membrane. It catalyses the reaction a quinone + NADH + 5 H(+)(in) = a quinol + NAD(+) + 4 H(+)(out). Its function is as follows. NDH-1 shuttles electrons from NADH, via FMN and iron-sulfur (Fe-S) centers, to quinones in the respiratory chain. The immediate electron acceptor for the enzyme in this species is believed to be ubiquinone. Couples the redox reaction to proton translocation (for every two electrons transferred, four hydrogen ions are translocated across the cytoplasmic membrane), and thus conserves the redox energy in a proton gradient. This is NADH-quinone oxidoreductase subunit I from Rhodospirillum rubrum (strain ATCC 11170 / ATH 1.1.1 / DSM 467 / LMG 4362 / NCIMB 8255 / S1).